The chain runs to 212 residues: Regulatory protein RecX (212 aa).

Belongs to the RecX family.

The protein resides in the cytoplasm. Modulates RecA activity. The polypeptide is Regulatory protein RecX (Clostridium perfringens (strain SM101 / Type A)).